The primary structure comprises 87 residues: RNA-binding protein Hfq (87 aa).

In terms of domain architecture, Sm spans 9-68 (DPFLNALRRERIPVSIYLVNGIKLQGQIESFDQFVILLKNTVSQMVYKHAISTVVPARAV).

The protein belongs to the Hfq family. Homohexamer.

In terms of biological role, RNA chaperone that binds small regulatory RNA (sRNAs) and mRNAs to facilitate mRNA translational regulation in response to envelope stress, environmental stress and changes in metabolite concentrations. Also binds with high specificity to tRNAs. The chain is RNA-binding protein Hfq from Aeromonas hydrophila subsp. hydrophila (strain ATCC 7966 / DSM 30187 / BCRC 13018 / CCUG 14551 / JCM 1027 / KCTC 2358 / NCIMB 9240 / NCTC 8049).